Consider the following 184-residue polypeptide: Protein GrpE (184 aa).

The protein belongs to the GrpE family. Homodimer.

It localises to the cytoplasm. Functionally, participates actively in the response to hyperosmotic and heat shock by preventing the aggregation of stress-denatured proteins, in association with DnaK and GrpE. It is the nucleotide exchange factor for DnaK and may function as a thermosensor. Unfolded proteins bind initially to DnaJ; upon interaction with the DnaJ-bound protein, DnaK hydrolyzes its bound ATP, resulting in the formation of a stable complex. GrpE releases ADP from DnaK; ATP binding to DnaK triggers the release of the substrate protein, thus completing the reaction cycle. Several rounds of ATP-dependent interactions between DnaJ, DnaK and GrpE are required for fully efficient folding. The sequence is that of Protein GrpE from Pseudomonas putida (strain GB-1).